Reading from the N-terminus, the 537-residue chain is ESX-2 secretion system protein EccE2 (537 aa).

Residues 31–51 (ALGGQLGAVMAVVVGVALVFV) form a helical membrane-spanning segment.

Belongs to the EccE family. Could be part of the ESX-2 / type VII secretion system (T7SS), which is composed of cytosolic and membrane components.

Its subcellular location is the cell membrane. This is ESX-2 secretion system protein EccE2 (eccE2) from Mycobacterium tuberculosis (strain CDC 1551 / Oshkosh).